The chain runs to 152 residues: Prefoldin subunit alpha (152 aa).

The disordered stretch occupies residues 110–152 (ETQEEVDELESESQELEQQAQQMQQQMQQQQMQQMQQSQGDEE). The span at 111-124 (TQEEVDELESESQE) shows a compositional bias: acidic residues. The span at 125 to 152 (LEQQAQQMQQQMQQQQMQQMQQSQGDEE) shows a compositional bias: low complexity.

This sequence belongs to the prefoldin alpha subunit family. Heterohexamer of two alpha and four beta subunits.

The protein resides in the cytoplasm. Molecular chaperone capable of stabilizing a range of proteins. Seems to fulfill an ATP-independent, HSP70-like function in archaeal de novo protein folding. This Halorubrum lacusprofundi (strain ATCC 49239 / DSM 5036 / JCM 8891 / ACAM 34) protein is Prefoldin subunit alpha.